The following is a 296-amino-acid chain: Iron(3+)-hydroxamate-binding protein FhuD (296 aa).

The tat-type signal signal peptide spans 1-30 (MSGLPLISRRRLLTAMALSPLLWQMNTAHA). In terms of domain architecture, Fe/B12 periplasmic-binding spans 37–296 (RIVALEWLPV…VLDNAIGGKA (260 aa)). W68, R84, S103, Y106, F124, W217, W273, F274, and Y275 together coordinate Fe(III)-coprogen.

This sequence belongs to the bacterial solute-binding protein 8 family. In terms of assembly, the complex is composed of two ATP-binding proteins (FhuC), a transmembrane protein (FhuB) and a solute-binding protein (FhuD). FhuD interacts with FhuB. Substrate-loaded FhuD binds FhuB more strongly than FhuD alone. In terms of processing, exported by the Tat system. The position of the signal peptide cleavage has been experimentally proven. Can also be exported by the Sec system.

It localises to the periplasm. Part of the ABC transporter complex FhuCDB involved in iron(3+)-hydroxamate import. Binds the iron(3+)-hydroxamate complex and transfers it to the membrane-bound permease. Required for the transport of all iron(3+)-hydroxamate siderophores such as ferrichrome, gallichrome, desferrioxamine, coprogen, aerobactin, shizokinen, rhodotorulic acid and the antibiotic albomycin. The chain is Iron(3+)-hydroxamate-binding protein FhuD (fhuD) from Escherichia coli (strain K12).